The chain runs to 100 residues: uncharacterized protein (100 aa).

The span at 68-91 shows a compositional bias: basic and acidic residues; it reads EQYASGAGEKRKEQSSGNSRRKDP. A disordered region spans residues 68–100; the sequence is EQYASGAGEKRKEQSSGNSRRKDPSLYNWSDVK.

This sequence belongs to the chlamydial CPn_0121/CT_031/TC_0300 family.

This is an uncharacterized protein from Chlamydia muridarum (strain MoPn / Nigg).